We begin with the raw amino-acid sequence, 564 residues long: MVNKEEAQRLKELGNKCFQEGKYEEAVKYFSDAITNDPLDHVLYSNLSGAFASLGRFYEALESANKCISIKKDWPKGYIRKGCAEHGLRQLSNAEKTYLEGLKIDPNNKSLQDALSKVRNENMLENAQLIAHLNNIIENDPQLKSYKEENSNYPHELLNTIKSINSNPMNIRIILSTCHPKISEGVEKFFGFKFTGEGNDAEERQRQQREEEERRKKKEEEERKKKEEEEMKKQNRTPEQIQGDEHKLKGNEFYKQKKFDEALKEYEEAIQINPNDIMYHYNKAAVHIEMKNYDKAVETCLYAIENRYNFKAEFIQVAKLYNRLAISYINMKKYDLAIEAYRKSLVEDNNRATRNALKELERRKEKEEKEAYIDPDKAEEHKNKGNEYFKNNDFPNAKKEYDEAIRRNPNDAKLYSNRAAALTKLIEYPSALEDVMKAIELDPTFVKAYSRKGNLHFFMKDYYKALQAYNKGLELDPNNKECLEGYQRCAFKIDEMSKSEKVDEEQFKKSMADPEIQQIISDPQFQIILQKLNENPNSISEYIKDPKIFNGLQKLIAAGILKVR.

TPR repeat units lie at residues 7-40, 42-74, and 76-108; these read AQRL…DPLD, VLYS…KKDW, and KGYI…DPNN. A coiled-coil region spans residues 197-239; it reads EGNDAEERQRQQREEEERRKKKEEEERKKKEEEEMKKQNRTPE. Residues 199–247 form a disordered region; it reads NDAEERQRQQREEEERRKKKEEEERKKKEEEEMKKQNRTPEQIQGDEHK. Positions 201-233 are enriched in basic and acidic residues; that stretch reads AEERQRQQREEEERRKKKEEEERKKKEEEEMKK. TPR repeat units follow at residues 243–276, 278–310, 318–351, 378–411, 413–445, and 446–479; these read GDEH…NPND, MYHY…RYNF, AKLY…DNNR, AEEH…NPND, KLYS…DPTF, and VKAY…DPNN. Residues 513–552 form the STI1 domain; the sequence is DPEIQQIISDPQFQIILQKLNENPNSISEYIKDPKIFNGL.

As to quaternary structure, monomer. Homodimer. Forms a complex composed of HOP and chaperones HSP70 and HSP90; the interaction is stronger in the absence of ATP. Interacts (via TPR 1, 2, 3, 7, 8 and 9 repeats) with HSP70 (via C-terminus); the interaction is direct and is stronger in the absence of ATP. Interacts (via TPR 4, 5 and 6 repeats) with HSP90 (via C-terminus); the interaction is direct.

The protein resides in the cytoplasm. Its function is as follows. Acts as a co-chaperone and mediates the association of the chaperones HSP70 and HSP90 probably facilitating substrate transfer from HSP70 to HSP90. Stimulates HSP70 ATPase activity and, in contrast, inhibits HSP90 ATPase activity. This chain is Hsp70-Hsp90 organising protein, found in Plasmodium falciparum (isolate 3D7).